The following is a 382-amino-acid chain: Histidinol-phosphate aminotransferase (382 aa).

K215 is modified (N6-(pyridoxal phosphate)lysine). The disordered stretch occupies residues 363–382 (NIDNQNKTYSQTSSIRKGTI).

The protein belongs to the class-II pyridoxal-phosphate-dependent aminotransferase family. Histidinol-phosphate aminotransferase subfamily. Homodimer. Pyridoxal 5'-phosphate serves as cofactor.

The enzyme catalyses L-histidinol phosphate + 2-oxoglutarate = 3-(imidazol-4-yl)-2-oxopropyl phosphate + L-glutamate. It functions in the pathway amino-acid biosynthesis; L-histidine biosynthesis; L-histidine from 5-phospho-alpha-D-ribose 1-diphosphate: step 7/9. This is Histidinol-phosphate aminotransferase from Yersinia pestis bv. Antiqua (strain Antiqua).